A 429-amino-acid chain; its full sequence is Glutamate-1-semialdehyde 2,1-aminomutase 1 (429 aa).

Lysine 268 bears the N6-(pyridoxal phosphate)lysine mark.

This sequence belongs to the class-III pyridoxal-phosphate-dependent aminotransferase family. HemL subfamily. Homodimer. It depends on pyridoxal 5'-phosphate as a cofactor.

The protein resides in the cytoplasm. It catalyses the reaction (S)-4-amino-5-oxopentanoate = 5-aminolevulinate. It participates in porphyrin-containing compound metabolism; protoporphyrin-IX biosynthesis; 5-aminolevulinate from L-glutamyl-tRNA(Glu): step 2/2. The polypeptide is Glutamate-1-semialdehyde 2,1-aminomutase 1 (Listeria innocua serovar 6a (strain ATCC BAA-680 / CLIP 11262)).